Reading from the N-terminus, the 357-residue chain is tRNA-specific 2-thiouridylase MnmA (357 aa).

Residues 7-14 (GMSGGVDS) and Met33 contribute to the ATP site. The active-site Nucleophile is the Cys103. A disulfide bridge links Cys103 with Cys200. Gly127 contacts ATP. Residues 150–152 (KDQ) are interaction with tRNA. Cys200 serves as the catalytic Cysteine persulfide intermediate. Residues 306-307 (RY) are interaction with tRNA.

This sequence belongs to the MnmA/TRMU family.

Its subcellular location is the cytoplasm. It carries out the reaction S-sulfanyl-L-cysteinyl-[protein] + uridine(34) in tRNA + AH2 + ATP = 2-thiouridine(34) in tRNA + L-cysteinyl-[protein] + A + AMP + diphosphate + H(+). Catalyzes the 2-thiolation of uridine at the wobble position (U34) of tRNA, leading to the formation of s(2)U34. The protein is tRNA-specific 2-thiouridylase MnmA of Lachnoclostridium phytofermentans (strain ATCC 700394 / DSM 18823 / ISDg) (Clostridium phytofermentans).